The primary structure comprises 128 residues: Small ribosomal subunit protein uS11 (128 aa).

Belongs to the universal ribosomal protein uS11 family. In terms of assembly, part of the 30S ribosomal subunit. Interacts with proteins S7 and S18. Binds to IF-3.

Its function is as follows. Located on the platform of the 30S subunit, it bridges several disparate RNA helices of the 16S rRNA. Forms part of the Shine-Dalgarno cleft in the 70S ribosome. The sequence is that of Small ribosomal subunit protein uS11 from Ligilactobacillus salivarius (strain UCC118) (Lactobacillus salivarius).